The sequence spans 345 residues: Protein RecA (345 aa).

Residue 65-72 (GPESSGKT) participates in ATP binding. Residues 326–336 (EKFQPAEAARE) show a composition bias toward basic and acidic residues. The disordered stretch occupies residues 326 to 345 (EKFQPAEAAREEGDDEGEDE).

This sequence belongs to the RecA family.

It is found in the cytoplasm. Functionally, can catalyze the hydrolysis of ATP in the presence of single-stranded DNA, the ATP-dependent uptake of single-stranded DNA by duplex DNA, and the ATP-dependent hybridization of homologous single-stranded DNAs. It interacts with LexA causing its activation and leading to its autocatalytic cleavage. In Stenotrophomonas maltophilia (strain K279a), this protein is Protein RecA.